The primary structure comprises 314 residues: Phospho-N-acetylmuramoyl-pentapeptide-transferase (314 aa).

The next 10 membrane-spanning stretches (helical) occupy residues Leu-4 to Ile-24, Thr-52 to Ile-72, Leu-77 to Tyr-97, Ile-111 to Phe-131, Leu-146 to Ala-166, Leu-169 to Ala-189, Ile-191 to Phe-211, Ile-219 to Tyr-239, Val-242 to Ile-262, and Ile-294 to Leu-314.

It belongs to the glycosyltransferase 4 family. MraY subfamily. Mg(2+) is required as a cofactor.

It localises to the cell inner membrane. It carries out the reaction UDP-N-acetyl-alpha-D-muramoyl-L-alanyl-gamma-D-glutamyl-meso-2,6-diaminopimeloyl-D-alanyl-D-alanine + di-trans,octa-cis-undecaprenyl phosphate = di-trans,octa-cis-undecaprenyl diphospho-N-acetyl-alpha-D-muramoyl-L-alanyl-D-glutamyl-meso-2,6-diaminopimeloyl-D-alanyl-D-alanine + UMP. It functions in the pathway cell wall biogenesis; peptidoglycan biosynthesis. Its function is as follows. Catalyzes the initial step of the lipid cycle reactions in the biosynthesis of the cell wall peptidoglycan: transfers peptidoglycan precursor phospho-MurNAc-pentapeptide from UDP-MurNAc-pentapeptide onto the lipid carrier undecaprenyl phosphate, yielding undecaprenyl-pyrophosphoryl-MurNAc-pentapeptide, known as lipid I. This chain is Phospho-N-acetylmuramoyl-pentapeptide-transferase, found in Petrotoga mobilis (strain DSM 10674 / SJ95).